A 425-amino-acid polypeptide reads, in one-letter code: Histidine--tRNA ligase (425 aa).

Belongs to the class-II aminoacyl-tRNA synthetase family. Homodimer.

It localises to the cytoplasm. The catalysed reaction is tRNA(His) + L-histidine + ATP = L-histidyl-tRNA(His) + AMP + diphosphate + H(+). The polypeptide is Histidine--tRNA ligase (Aeromonas salmonicida (strain A449)).